The sequence spans 384 residues: N-acetyldiaminopimelate deacetylase (384 aa).

The active site involves aspartate 74. Glutamate 133 (proton acceptor) is an active-site residue.

It belongs to the peptidase M20A family. N-acetyldiaminopimelate deacetylase subfamily.

It carries out the reaction N-acetyl-(2S,6S)-2,6-diaminopimelate + H2O = (2S,6S)-2,6-diaminopimelate + acetate. Its pathway is amino-acid biosynthesis; L-lysine biosynthesis via DAP pathway; LL-2,6-diaminopimelate from (S)-tetrahydrodipicolinate (acetylase route): step 3/3. Its function is as follows. Catalyzes the conversion of N-acetyl-diaminopimelate to diaminopimelate and acetate. The protein is N-acetyldiaminopimelate deacetylase of Lactiplantibacillus plantarum (strain ATCC BAA-793 / NCIMB 8826 / WCFS1) (Lactobacillus plantarum).